We begin with the raw amino-acid sequence, 138 residues long: Acyl carrier protein 1, chloroplastic (138 aa).

A chloroplast-targeting transit peptide spans 1 to 56; the sequence is MASLSATTTVRVQPSSSSLHKLSQGNGRCSSIVCLDWGKSSFPTLRTSRRRSFISA. Residues 59-134 enclose the Carrier domain; that stretch reads KETIDKVCDI…QAADVIESLL (76 aa). Residue Ser-94 is modified to O-(pantetheine 4'-phosphoryl)serine.

It belongs to the acyl carrier protein (ACP) family. 4'-phosphopantetheine is transferred from CoA to a specific serine of apo-ACP by acpS. This modification is essential for activity because fatty acids are bound in thioester linkage to the sulfhydryl of the prosthetic group.

It is found in the plastid. The protein localises to the chloroplast. It participates in lipid metabolism; fatty acid biosynthesis. Carrier of the growing fatty acid chain in fatty acid biosynthesis. The polypeptide is Acyl carrier protein 1, chloroplastic (ACL1.1) (Spinacia oleracea (Spinach)).